Reading from the N-terminus, the 346-residue chain is D-alanine--D-alanine ligase (346 aa).

One can recognise an ATP-grasp domain in the interval 133-324; that stretch reads KLYAQSVGVK…IVDNLAKNIE (192 aa). 159–211 lines the ATP pocket; it reads LSFPCILKPARLGSSIGISIVKDESELKYAKDVAFEFDEDVVVEQFVSNIKEY. Mg(2+) contacts are provided by Asp-284, Glu-296, and Asn-298.

It belongs to the D-alanine--D-alanine ligase family. Requires Mg(2+) as cofactor. Mn(2+) serves as cofactor.

It is found in the cytoplasm. It catalyses the reaction 2 D-alanine + ATP = D-alanyl-D-alanine + ADP + phosphate + H(+). It participates in cell wall biogenesis; peptidoglycan biosynthesis. Functionally, cell wall formation. This Campylobacter lari (strain RM2100 / D67 / ATCC BAA-1060) protein is D-alanine--D-alanine ligase.